The following is a 916-amino-acid chain: Probable serine/threonine-protein kinase DDB_G0267514 (916 aa).

3 disordered regions span residues 283-311 (SGGGNSGSGGGNSGSGGSSGNGTSGSGGS), 461-518 (NNNQ…SPLD), and 550-646 (FNNQ…EPPS). Low complexity-rich tracts occupy residues 461–493 (NNNQNNQNNNQQQQQYQQQQHHQQQQQQYQQQP) and 550–622 (FNNQ…LINN). A compositionally biased stretch (polar residues) spans 623 to 646 (HSPNQYNNQGNILKNSGSVVEPPS). The 255-residue stretch at 662 to 916 (LKISSKLGEG…EILNLLNEIP (255 aa)) folds into the Protein kinase domain. Residues 668 to 676 (LGEGTFGVV) and Lys689 each bind ATP. Asp784 acts as the Proton acceptor in catalysis.

Belongs to the protein kinase superfamily. TKL Ser/Thr protein kinase family.

It catalyses the reaction L-seryl-[protein] + ATP = O-phospho-L-seryl-[protein] + ADP + H(+). It carries out the reaction L-threonyl-[protein] + ATP = O-phospho-L-threonyl-[protein] + ADP + H(+). In Dictyostelium discoideum (Social amoeba), this protein is Probable serine/threonine-protein kinase DDB_G0267514.